Consider the following 856-residue polypeptide: Leucine--tRNA ligase (856 aa).

A 'HIGH' region motif is present at residues 42-52; that stretch reads PYPSGKLHMGH. The short motif at 615-619 is the 'KMSKS' region element; that stretch reads KMSKS. Lys-618 serves as a coordination point for ATP.

It belongs to the class-I aminoacyl-tRNA synthetase family.

The protein resides in the cytoplasm. It carries out the reaction tRNA(Leu) + L-leucine + ATP = L-leucyl-tRNA(Leu) + AMP + diphosphate. This is Leucine--tRNA ligase from Chromohalobacter salexigens (strain ATCC BAA-138 / DSM 3043 / CIP 106854 / NCIMB 13768 / 1H11).